The chain runs to 178 residues: Caveolin-1 (178 aa).

S2 bears the N-acetylserine mark. A Phosphoserine modification is found at S2. Residues 2-94 are required for homooligomerization; that stretch reads SGGKYIDSEG…WKASFTTFTV (93 aa). The Cytoplasmic portion of the chain corresponds to 2 to 104; sequence SGGKYIDSEG…TKYWFYRLLS (103 aa). K5 is modified (N6-acetyllysine; alternate). Residue K5 forms a Glycyl lysine isopeptide (Lys-Gly) (interchain with G-Cter in ubiquitin); alternate linkage. A Phosphotyrosine modification is found at Y6. S9 is subject to Phosphoserine. Position 14 is a phosphotyrosine; by ABL1 (Y14). A Phosphotyrosine modification is found at Y25. Glycyl lysine isopeptide (Lys-Gly) (interchain with G-Cter in ubiquitin) cross-links involve residues K26, K30, K39, K47, and K57. An interaction with CAVIN3 region spans residues 82-94; that stretch reads DGIWKASFTTFTV. An intramembrane region (helical) is located at residues 105-125; the sequence is ALFGIPMALIWGIYFAILSFL. Residues 126–178 are Cytoplasmic-facing; sequence HIWAVVPCIRSYLIEIQCISRIYSICIHTFCDPLFEAIGKIFSNVRIALQKEI. Residues 131-142 form an interacts with SPRY1, SPRY2, SPRY3 and SPRY4 region; sequence VPCIRSYLIEIQ. S-palmitoyl cysteine attachment occurs at residues C133, C143, and C156. The interval 149–160 is interacts with SPRY1, SPRY2, and SPRY4; the sequence is SICIHTFCDPLF. The interval 167-178 is interacts with SPRY1, SPRY2, SPRY3 and SPRY4; it reads FSNVRIALQKEI.

Belongs to the caveolin family. As to quaternary structure, homooligomer. Interacts with GLIPR2. Interacts with NOSTRIN. Interacts with SNAP25 and STX1A. Interacts (via the N-terminus) with DPP4; the interaction is direct. Interacts with CTNNB1, CDH1 and JUP. Interacts with PACSIN2; this interaction induces membrane tubulation. Interacts with SLC7A9. Interacts with BMX and BTK. Interacts with TGFBR1. Interacts with CAVIN3 (via leucine-zipper domain) in a cholesterol-sensitive manner. Interacts with CAVIN1. Interacts with EHD2 in a cholesterol-dependent manner. Forms a ternary complex with UBXN6 and VCP; mediates CAV1 targeting to lysosomes for degradation. Interacts with ABCG1; this interaction regulates ABCG1-mediated cholesterol efflux. Interacts with NEU3; this interaction enhances NEU3 sialidase activity within caveola. Interacts (via C-terminus) with SPRY1, SPRY2 (via C-terminus), SPRY3, and SPRY4. Interacts with IGFBP5; this interaction allows trafficking of IGFBP5 from the plasma membrane to the nucleus. Phosphorylated at Tyr-14 by ABL1 in response to oxidative stress. In terms of processing, ubiquitinated. Undergo monoubiquitination and multi- and/or polyubiquitination. Monoubiquitination of N-terminal lysines promotes integration in a ternary complex with UBXN6 and VCP which promotes oligomeric CAV1 targeting to lysosomes for degradation. Ubiquitinated by ZNRF1; leading to degradation and modulation of the TLR4-mediated immune response.

The protein localises to the golgi apparatus membrane. Its subcellular location is the cell membrane. It is found in the membrane. It localises to the caveola. The protein resides in the membrane raft. Its function is as follows. May act as a scaffolding protein within caveolar membranes. Forms a stable heterooligomeric complex with CAV2 that targets to lipid rafts and drives caveolae formation. Mediates the recruitment of CAVIN proteins (CAVIN1/2/3/4) to the caveolae. Interacts directly with G-protein alpha subunits and can functionally regulate their activity. Involved in the costimulatory signal essential for T-cell receptor (TCR)-mediated T-cell activation. Its binding to DPP4 induces T-cell proliferation and NF-kappa-B activation in a T-cell receptor/CD3-dependent manner. Recruits CTNNB1 to caveolar membranes and may regulate CTNNB1-mediated signaling through the Wnt pathway. Negatively regulates TGFB1-mediated activation of SMAD2/3 by mediating the internalization of TGFBR1 from membrane rafts leading to its subsequent degradation. Binds 20(S)-hydroxycholesterol (20(S)-OHC). The polypeptide is Caveolin-1 (CAV1) (Didelphis virginiana (North American opossum)).